Here is a 365-residue protein sequence, read N- to C-terminus: 3-dehydroquinate synthase (365 aa).

NAD(+)-binding positions include 72-77, 130-131, Lys142, and Lys151; these read SGEKEK and TT. Residues Glu184, His247, and His264 each coordinate Zn(2+).

It belongs to the sugar phosphate cyclases superfamily. Dehydroquinate synthase family. Co(2+) serves as cofactor. Zn(2+) is required as a cofactor. It depends on NAD(+) as a cofactor.

The protein localises to the cytoplasm. The enzyme catalyses 7-phospho-2-dehydro-3-deoxy-D-arabino-heptonate = 3-dehydroquinate + phosphate. It participates in metabolic intermediate biosynthesis; chorismate biosynthesis; chorismate from D-erythrose 4-phosphate and phosphoenolpyruvate: step 2/7. Catalyzes the conversion of 3-deoxy-D-arabino-heptulosonate 7-phosphate (DAHP) to dehydroquinate (DHQ). This chain is 3-dehydroquinate synthase, found in Bacillus cereus (strain AH187).